The chain runs to 488 residues: Malonate-semialdehyde dehydrogenase (488 aa).

Ala-150, Phe-152, Lys-176, Glu-179, Arg-180, Ser-229, and Thr-251 together coordinate NAD(+). The active-site Nucleophile is the Cys-284. Glu-382 serves as a coordination point for NAD(+).

This sequence belongs to the aldehyde dehydrogenase family. IolA subfamily. Homotetramer.

The catalysed reaction is 3-oxopropanoate + NAD(+) + CoA + H2O = hydrogencarbonate + acetyl-CoA + NADH + H(+). The enzyme catalyses 2-methyl-3-oxopropanoate + NAD(+) + CoA + H2O = propanoyl-CoA + hydrogencarbonate + NADH + H(+). It functions in the pathway polyol metabolism; myo-inositol degradation into acetyl-CoA; acetyl-CoA from myo-inositol: step 7/7. Catalyzes the oxidation of malonate semialdehyde (MSA) and methylmalonate semialdehyde (MMSA) into acetyl-CoA and propanoyl-CoA, respectively. Is involved in a myo-inositol catabolic pathway. Bicarbonate, and not CO2, is the end-product of the enzymatic reaction. This Listeria monocytogenes serotype 4b (strain F2365) protein is Malonate-semialdehyde dehydrogenase.